We begin with the raw amino-acid sequence, 84 residues long: AIFKSYCEIIVTHFPFDEQNCSMKLGTWTYDGSVVAINPESDQPDLSNFMESGEWVIKESRGWKHWVFYACCPTTPYLDITYHF.

2 disulfide bridges follow: Cys-7–Cys-21 and Cys-71–Cys-72. An N-linked (GlcNAc...) asparagine glycan is attached at Asn-20.

Belongs to the ligand-gated ion channel (TC 1.A.9) family. Acetylcholine receptor (TC 1.A.9.1) subfamily. Alpha-1/CHRNA1 sub-subfamily. In terms of assembly, one of the alpha chains that assemble within the acetylcholine receptor, a pentamer of two alpha chains, a beta, a delta, and a gamma (in immature muscle) or epsilon (in mature muscle) chains. The muscle heteropentamer composed of alpha-1, beta-1, delta, epsilon subunits interacts with the alpha-conotoxin ImII.

The protein resides in the postsynaptic cell membrane. It localises to the cell membrane. The enzyme catalyses K(+)(in) = K(+)(out). The catalysed reaction is Na(+)(in) = Na(+)(out). In terms of biological role, upon acetylcholine binding, the AChR responds by an extensive change in conformation that affects all subunits and leads to opening of an ion-conducting channel across the plasma membrane. The sequence is that of Acetylcholine receptor subunit alpha (CHRNA1) from Felis catus (Cat).